The primary structure comprises 185 residues: Ribosome-recycling factor (185 aa).

It belongs to the RRF family.

The protein localises to the cytoplasm. Its function is as follows. Responsible for the release of ribosomes from messenger RNA at the termination of protein biosynthesis. May increase the efficiency of translation by recycling ribosomes from one round of translation to another. This chain is Ribosome-recycling factor, found in Nitrosomonas europaea (strain ATCC 19718 / CIP 103999 / KCTC 2705 / NBRC 14298).